Reading from the N-terminus, the 354-residue chain is uncharacterized protein (354 aa).

A signal peptide spans 1 to 21 (MFQKKTYAVFLILLLMMFTAA). The N-palmitoyl cysteine moiety is linked to residue Cys-22. Cys-22 is lipidated: S-diacylglycerol cysteine.

It localises to the cell membrane. Its subcellular location is the membrane raft. This is an uncharacterized protein from Bacillus subtilis (strain 168).